Reading from the N-terminus, the 524-residue chain is Alkaline phosphatase, tissue-nonspecific isozyme (524 aa).

The first 17 residues, 1-17, serve as a signal peptide directing secretion; the sequence is MISPFLVLAIGTCLTNS. Asp-60 provides a ligand contact to Mg(2+). 2 residues coordinate Zn(2+): Asp-60 and Ser-110. The active-site Phosphoserine intermediate is Ser-110. A Phosphoserine modification is found at Ser-110. A disulfide bridge connects residues Cys-139 and Cys-201. N-linked (GlcNAc...) asparagine glycosylation is present at Asn-140. Thr-173 is a binding site for Mg(2+). N-linked (GlcNAc...) asparagine glycosylation is present at Asn-230. Glu-235 contributes to the Ca(2+) binding site. Asn-271 carries an N-linked (GlcNAc...) asparagine glycan. Positions 290 and 291 each coordinate Ca(2+). Residue Asn-303 is glycosylated (N-linked (GlcNAc...) asparagine). Ca(2+) is bound at residue Asp-306. Glu-332 is a Mg(2+) binding site. Positions 337, 341, 378, and 379 each coordinate Zn(2+). N-linked (GlcNAc...) asparagine glycosylation is present at Asn-430. His-454 contacts Zn(2+). A disulfide bond links Cys-489 and Cys-497. Gly-501 carries the GPI-anchor amidated glycine lipid modification. Positions 502–524 are cleaved as a propeptide — removed in mature form; sequence SGSAPSPGALLLPLAVLSLRTLF.

The protein belongs to the alkaline phosphatase family. In terms of assembly, homodimer. The cofactor is Mg(2+). Requires Zn(2+) as cofactor. It depends on Ca(2+) as a cofactor. Post-translationally, N-glycosylated. Widely expressed. Expressed in DRG neurons and spinal cord neurons.

The protein localises to the cell membrane. Its subcellular location is the extracellular vesicle membrane. It localises to the mitochondrion membrane. The protein resides in the mitochondrion intermembrane space. It carries out the reaction a phosphate monoester + H2O = an alcohol + phosphate. The enzyme catalyses diphosphate + H2O = 2 phosphate + H(+). It catalyses the reaction pyridoxal 5'-phosphate + H2O = pyridoxal + phosphate. The catalysed reaction is phosphoethanolamine + H2O = ethanolamine + phosphate. It carries out the reaction N-phosphocreatine + H2O = creatine + phosphate. The enzyme catalyses ATP + H2O = ADP + phosphate + H(+). It catalyses the reaction ADP + H2O = AMP + phosphate + H(+). The catalysed reaction is AMP + H2O = adenosine + phosphate. Its activity is regulated as follows. Phosphatase activity is specifically inhibited by 5-((5-chloro-2-methoxyphenyl)sulfonamido)nicotinamide (SBI-425). In terms of biological role, alkaline phosphatase that metabolizes various phosphate compounds and plays a key role in skeletal mineralization and adaptive thermogenesis. Has broad substrate specificity and can hydrolyze a considerable variety of compounds: however, only a few substrates, such as diphosphate (inorganic pyrophosphate; PPi), pyridoxal 5'-phosphate (PLP) and N-phosphocreatine are natural substrates. Plays an essential role in skeletal and dental mineralization via its ability to hydrolyze extracellular diphosphate, a potent mineralization inhibitor, to phosphate: it thereby promotes hydroxyapatite crystal formation and increases inorganic phosphate concentration. Acts in a non-redundant manner with PHOSPHO1 in skeletal mineralization: while PHOSPHO1 mediates the initiation of hydroxyapatite crystallization in the matrix vesicles (MVs), ALPL/TNAP catalyzes the spread of hydroxyapatite crystallization in the extracellular matrix. Also promotes dephosphorylation of osteopontin (SSP1), an inhibitor of hydroxyapatite crystallization in its phosphorylated state; it is however unclear whether ALPL/TNAP mediates SSP1 dephosphorylation via a direct or indirect manner. Catalyzes dephosphorylation of PLP to pyridoxal (PL), the transportable form of vitamin B6, in order to provide a sufficient amount of PLP in the brain, an essential cofactor for enzymes catalyzing the synthesis of diverse neurotransmitters. Additionally, also able to mediate ATP degradation in a stepwise manner to adenosine, thereby regulating the availability of ligands for purinergic receptors. Also capable of dephosphorylating microbial products, such as lipopolysaccharides (LPS) as well as other phosphorylated small-molecules, such as poly-inosine:cytosine (poly I:C). Acts as a key regulator of adaptive thermogenesis as part of the futile creatine cycle: localizes to the mitochondria of thermogenic fat cells and acts by mediating hydrolysis of N-phosphocreatine to initiate a futile cycle of creatine dephosphorylation and phosphorylation. During the futile creatine cycle, creatine and N-phosphocreatine are in a futile cycle, which dissipates the high energy charge of N-phosphocreatine as heat without performing any mechanical or chemical work. This Mus musculus (Mouse) protein is Alkaline phosphatase, tissue-nonspecific isozyme.